The following is a 161-amino-acid chain: MTKTGVYPGTFDPITNGHLDVIKRALKIFDELIVAVAMSSYKKTPIFTVEERVHFIAQTTKDLKNLKVEVFDGLLVNFIKEKKAVAIVRGLRAVSDYEFELQLAHANRRLFRDIETVFLMPSEEYSFLSSSLVKEIAYFGGSVKSLVPPIVEKALRNKFKK.

Position 10 (T10) interacts with substrate. Residues 10 to 11 and H18 contribute to the ATP site; that span reads TF. Substrate contacts are provided by K42, L75, and R89. ATP is bound by residues 90–92, E100, and 125–131; these read GLR and YSFLSSS.

It belongs to the bacterial CoaD family. Homohexamer. Mg(2+) serves as cofactor.

The protein localises to the cytoplasm. The enzyme catalyses (R)-4'-phosphopantetheine + ATP + H(+) = 3'-dephospho-CoA + diphosphate. The protein operates within cofactor biosynthesis; coenzyme A biosynthesis; CoA from (R)-pantothenate: step 4/5. In terms of biological role, reversibly transfers an adenylyl group from ATP to 4'-phosphopantetheine, yielding dephospho-CoA (dPCoA) and pyrophosphate. The protein is Phosphopantetheine adenylyltransferase of Thermodesulfovibrio yellowstonii (strain ATCC 51303 / DSM 11347 / YP87).